The primary structure comprises 542 residues: DM7 family protein CG15333 (542 aa).

It belongs to the DM7 family.

This chain is DM7 family protein CG15333, found in Drosophila melanogaster (Fruit fly).